The chain runs to 333 residues: Adenosine deaminase (333 aa).

Positions 12 and 14 each coordinate Zn(2+). Substrate contacts are provided by histidine 14, aspartate 16, and glycine 170. Histidine 197 serves as a coordination point for Zn(2+). Glutamate 200 serves as the catalytic Proton donor. Aspartate 278 contributes to the Zn(2+) binding site. Aspartate 279 contacts substrate.

Belongs to the metallo-dependent hydrolases superfamily. Adenosine and AMP deaminases family. Adenosine deaminase subfamily. Zn(2+) serves as cofactor.

The enzyme catalyses adenosine + H2O + H(+) = inosine + NH4(+). It catalyses the reaction 2'-deoxyadenosine + H2O + H(+) = 2'-deoxyinosine + NH4(+). Functionally, catalyzes the hydrolytic deamination of adenosine and 2-deoxyadenosine. The sequence is that of Adenosine deaminase from Pseudoalteromonas translucida (strain TAC 125).